Reading from the N-terminus, the 140-residue chain is Immunity protein RhsIC (140 aa).

Its function is as follows. Putative immunity protein component of a toxin-immunity protein module, which may function as a cellular contact-dependent growth inhibition (CDI) system. Blocks the toxic effects of expression of the C-terminus (residues 1519-1658) of cognate toxin RhsC in E.coli. The polypeptide is Immunity protein RhsIC (rhsIC) (Dickeya dadantii (strain 3937) (Erwinia chrysanthemi (strain 3937))).